The primary structure comprises 153 residues: Cytochrome c-type biogenesis protein CcmE (153 aa).

Over 1-6 (MNARRR) the chain is Cytoplasmic. The chain crosses the membrane as a helical; Signal-anchor for type II membrane protein span at residues 7–27 (LWSVLMLILAVGTAATLTIMA). Over 28 to 153 (LRHNLTYLYM…LDTPIAETTP (126 aa)) the chain is Periplasmic. Heme-binding residues include H121 and Y125. Positions 131–141 (ANKMQPTPTQH) are enriched in polar residues. The segment at 131 to 153 (ANKMQPTPTQHTHLDTPIAETTP) is disordered.

Belongs to the CcmE/CycJ family.

Its subcellular location is the cell inner membrane. Heme chaperone required for the biogenesis of c-type cytochromes. Transiently binds heme delivered by CcmC and transfers the heme to apo-cytochromes in a process facilitated by CcmF and CcmH. The chain is Cytochrome c-type biogenesis protein CcmE from Xylella fastidiosa (strain Temecula1 / ATCC 700964).